The sequence spans 339 residues: DNA-directed RNA polymerase subunit alpha (339 aa).

The segment at 1 to 233 (MVREEVAGST…DLFLPFLHAE (233 aa)) is alpha N-terminal domain (alpha-NTD). Residues 264–339 (KKGIPLNCIF…IDLLKNKLSF (76 aa)) form an alpha C-terminal domain (alpha-CTD) region.

The protein belongs to the RNA polymerase alpha chain family. In terms of assembly, in plastids the minimal PEP RNA polymerase catalytic core is composed of four subunits: alpha, beta, beta', and beta''. When a (nuclear-encoded) sigma factor is associated with the core the holoenzyme is formed, which can initiate transcription.

It is found in the plastid. The protein localises to the chloroplast. It carries out the reaction RNA(n) + a ribonucleoside 5'-triphosphate = RNA(n+1) + diphosphate. DNA-dependent RNA polymerase catalyzes the transcription of DNA into RNA using the four ribonucleoside triphosphates as substrates. This Elymus californicus (California bottlebrush grass) protein is DNA-directed RNA polymerase subunit alpha.